Consider the following 165-residue polypeptide: Sporulation thiol-disulfide oxidoreductase A (165 aa).

The signal sequence occupies residues 1 to 26 (MLTKRLLTIYIMLLGLIAWFPGAAQA). Residues 27 to 165 (EEKQPAVPAV…AEQLKEWTEE (139 aa)) form the Thioredoxin domain. Cysteine 65 and cysteine 68 are oxidised to a cystine.

The protein belongs to the thioredoxin family.

Its subcellular location is the spore outer membrane. Functionally, thiol-disulfide oxidoreductase with a reductive function, involved in spore cortex synthesis. It could be involved either in breaking disulfide bonds in cortex components or in proteins that are important for cortex synthesis, or in thiol/disulfide bond interchange. The polypeptide is Sporulation thiol-disulfide oxidoreductase A (stoA) (Bacillus subtilis (strain 168)).